Reading from the N-terminus, the 67-residue chain is Large ribosomal subunit protein bL35 (67 aa).

Belongs to the bacterial ribosomal protein bL35 family.

This chain is Large ribosomal subunit protein bL35, found in Caldanaerobacter subterraneus subsp. tengcongensis (strain DSM 15242 / JCM 11007 / NBRC 100824 / MB4) (Thermoanaerobacter tengcongensis).